Reading from the N-terminus, the 671-residue chain is E3 ubiquitin-protein ligase pub2 (671 aa).

Residues 1 to 112 (MENIRFEVQL…KDDYKTRITL (112 aa)) form the C2 domain. The WW domain maps to 242–275 (GPLPAGWEMRLSEDYHVYFVDHSTKTTTWSDPRD). Residues 338-671 (SVSDMKKKLL…IQETAGFGTE (334 aa)) form the HECT domain. Cys-639 (glycyl thioester intermediate) is an active-site residue.

As to quaternary structure, interacts with the E2 ubiquitin-conjugating enzyme ubc4.

The protein resides in the membrane. The protein localises to the cytoplasm. The catalysed reaction is S-ubiquitinyl-[E2 ubiquitin-conjugating enzyme]-L-cysteine + [acceptor protein]-L-lysine = [E2 ubiquitin-conjugating enzyme]-L-cysteine + N(6)-ubiquitinyl-[acceptor protein]-L-lysine.. The protein operates within protein modification; protein ubiquitination. In terms of biological role, E3 ubiquitin-protein ligase which accepts ubiquitin from an E2 ubiquitin-conjugating enzyme in the form of a thioester and then directly transfers the ubiquitin to targeted substrates. The sequence is that of E3 ubiquitin-protein ligase pub2 (pub2) from Schizosaccharomyces pombe (strain 972 / ATCC 24843) (Fission yeast).